Consider the following 101-residue polypeptide: Urease subunit beta (101 aa).

It belongs to the urease beta subunit family. As to quaternary structure, heterotrimer of UreA (gamma), UreB (beta) and UreC (alpha) subunits. Three heterotrimers associate to form the active enzyme.

It localises to the cytoplasm. The catalysed reaction is urea + 2 H2O + H(+) = hydrogencarbonate + 2 NH4(+). Its pathway is nitrogen metabolism; urea degradation; CO(2) and NH(3) from urea (urease route): step 1/1. The sequence is that of Urease subunit beta from Rhizobium leguminosarum bv. trifolii (strain WSM2304).